We begin with the raw amino-acid sequence, 124 residues long: MHELSYANAMLEAILNSIKKEEEKGKKIKKVTEINLEVGELTFINVEQLKFAFEVIAEGTVCEGAKINVEFIKPKCKCLDCGYEGEPEILDEFEVYCPKCKSIRLKLSGGKEFNIKNATVEYED.

Residue H2 participates in Ni(2+) binding. Residues C78, C81, C97, and C100 each coordinate Zn(2+).

Belongs to the HypA/HybF family.

Functionally, involved in the maturation of [NiFe] hydrogenases. Required for nickel insertion into the metal center of the hydrogenase. The chain is Hydrogenase maturation factor HypA from Methanocaldococcus jannaschii (strain ATCC 43067 / DSM 2661 / JAL-1 / JCM 10045 / NBRC 100440) (Methanococcus jannaschii).